The sequence spans 568 residues: Probable inactive poly [ADP-ribose] polymerase SRO1 (568 aa).

Over residues M1–G18 the composition is skewed to basic and acidic residues. Residues M1–S32 are disordered. The region spanning R77–W152 is the WWE domain. 2 disordered regions span residues D220–S241 and I453–R500. The region spanning D245–S463 is the PARP catalytic domain. Residues R497–G568 form the RST domain.

In terms of assembly, interacts with DREB2A, DREB2B, DREB2C and NAC082. Expressed in young developing tissues, such as young leaves and flowers and root tips. In mature plants, expressed in vasculature of leaves and roots.

The protein localises to the nucleus matrix. Probable inactive ADP-ribosyltransferase that functions with RCD1 to regulate oxidative stress, hormonal and developmental responses. May regulate some stress-responsive genes. Seems to play a smaller developmental role than R. The polypeptide is Probable inactive poly [ADP-ribose] polymerase SRO1 (SRO1) (Arabidopsis thaliana (Mouse-ear cress)).